The sequence spans 429 residues: Histidine--tRNA ligase (429 aa).

It belongs to the class-II aminoacyl-tRNA synthetase family. In terms of assembly, homodimer.

It localises to the cytoplasm. It catalyses the reaction tRNA(His) + L-histidine + ATP = L-histidyl-tRNA(His) + AMP + diphosphate + H(+). In Streptococcus pneumoniae serotype 2 (strain D39 / NCTC 7466), this protein is Histidine--tRNA ligase.